A 1136-amino-acid polypeptide reads, in one-letter code: MDSLIIEEEDEEALATLVPVPPRRKTHSYSLQFDHKPHHQIRKHSLDEVPRSATLASEAVYFDSSDDEFSTGGNITENAADETNAGAEEYTIVNPPPNVGLGDDDTEPLPEFIGAGGGSGIFKVPVRAAVHPGRPPCLELRPHPLRETQTGRFLRNIACTETQLWAGQENGIRFWNLEDAYEAGCGIGGQVPRGDEDTAPFHESVTTSPTMCLVADQSNKLLWSGHKDGKIRAWKMDQSSVSHDDDDSDPFKERVSWLAHRGPVNSIVISSYGDMWSCSEGGVIKIWPWDTLEKSLLLKPEEKHMAALLVERSAIDLRSQVTVNGTCSISSSEVKFLLADSVRAKVWAVQSLSFSIWDARSKDLLKVLNVDGQVENRGDLPPIQDQQVDDEMKLKFFSASKREKPQGFLQRSRNAIMGAAGAVRRVATRSAGAFSEDTRKTEAIVLAVDGTIWTGSISGLIVQWDGNGNRLRDVNHHHRPVLCFCTFGDRIYVGYASGYIQVLDLDGKLISSWVSHNEPVIKLAAGGGFIFSLATHGGVRGWYVTSPGPLDNIIRTELSQKETLYARQDNVRILIGTWNVGQGRASHDALMSWLGSVTSDVGIVAVGLQEVEMGAGFLAMSAAKETVGLEGSAVGQWWIDAIGKALDEKNTFERMGSRQLAGLLISLWARKDIRTHVGDLDVAAVPCGFGRAIGNKGGVGLRIRVYDRIMCFVNCHLAAHLEAVNRRNADFNHIFRLMVFSRGQNLSNAAAAGVSTSAYTTKSNTIPSTGAEEIKSDLAAADMVAFFGDFNYRLFGITYDEARDFISQRSFDWLRERDQLRAEMKVGKVFQGMREALITFPPTYKFERNRSGLGGYDSGEKKRIPAWCDRVIYRDTQSSPFSESNLQCPVVSSVIMYEACMDVTESDHKPVRCKFHATIAHVDKSVRRQELGKIIRSNEKILSIFEDLRFVPETSVSTNNIVLQSQDTVILTITNNSPTSQAIFNILCGGQAVVKDDGEDADYNPRGSFGLPRWLEVSPAAGIINPEGSVDVKVHHEDFYSMEEYVDGIPQNWWCEDTRDKEAILMVNIRGSCSTTLRSHSVKVRHCFSARVCLLENRPTNLTKNLGGSRRYPTDITRNGSTRPRTEDSVRRGKSR.

5 WD repeats span residues 147 to 185, 205 to 244, 259 to 297, 436 to 475, and 515 to 552; these read ETQT…EAGC, VTTS…VSHD, AHRG…KSLL, EDTR…RDVN, and SHNE…PLDN. Catalytic stretches follow at residues 782–798 and 861–876; these read DMVA…FGIT and KKRI…YRDT. A Glycyl lysine isopeptide (Lys-Gly) (interchain with G-Cter in ubiquitin) cross-link involves residue lysine 940. The segment at 1104–1136 is disordered; it reads KNLGGSRRYPTDITRNGSTRPRTEDSVRRGKSR. The span at 1124–1136 shows a compositional bias: basic and acidic residues; it reads PRTEDSVRRGKSR.

This sequence belongs to the inositol polyphosphate 5-phosphatase family. In terms of assembly, interacts with KIN10, but not with PHOT1. Requires Mg(2+) as cofactor. Expressed in young seedlings and flowers. Highly expressed in anther and pollen grains, but not in pistils. Not detected in maturated roots, stems and rosette leaves.

It is found in the nucleus. It carries out the reaction 1D-myo-inositol 1,4,5-trisphosphate + H2O = 1D-myo-inositol 1,4-bisphosphate + phosphate. In terms of biological role, converts inositol 1,4,5-trisphosphate (Ins(1,4,5)P3) to inositol 1,4-bisphosphate. Modulates cotyledon vein development through regulating auxin homeostasis. Involved in blue light responses. Decreases the amount of KIN10 degraded by the proteasome under low nutrient conditions. Participates with IP5P12 in the control of Ins(1,4,5)P3/Ca(2+) levels that is crucial for maintaining pollen dormancy and regulating early germination of pollen. May modulate auxin transport by regulating vesicle trafficking and thereby plays a role in root gravitropism. This chain is Type I inositol polyphosphate 5-phosphatase 13, found in Arabidopsis thaliana (Mouse-ear cress).